We begin with the raw amino-acid sequence, 302 residues long: Protoheme IX farnesyltransferase (302 aa).

Transmembrane regions (helical) follow at residues 24–44 (VVSLVTFTAVTGAVLAYFSGY), 48–68 (FFSVFTAIFCIAVGSGAAGAL), 97–117 (AALVFGLVLFALSVLLMELAV), 120–140 (LSAVLLSVAVFYYSVIYTVYL), 147–167 (NIVVGGGAGAFPPMIGWAAVA), 174–194 (SLVLFLIIFLWTPPHFWALAL), 221–241 (ILCYSVLLFITSILPYLLRFS), 245–265 (YMIVAFILGLVFLYYAINVYL), and 282–302 (FLLFGVFILDAALSTALGMLI).

The protein belongs to the UbiA prenyltransferase family. Protoheme IX farnesyltransferase subfamily.

It localises to the cell inner membrane. It catalyses the reaction heme b + (2E,6E)-farnesyl diphosphate + H2O = Fe(II)-heme o + diphosphate. The protein operates within porphyrin-containing compound metabolism; heme O biosynthesis; heme O from protoheme: step 1/1. Converts heme B (protoheme IX) to heme O by substitution of the vinyl group on carbon 2 of heme B porphyrin ring with a hydroxyethyl farnesyl side group. The polypeptide is Protoheme IX farnesyltransferase (Neorickettsia sennetsu (strain ATCC VR-367 / Miyayama) (Ehrlichia sennetsu)).